The primary structure comprises 738 residues: Putative cyclic nucleotide-gated ion channel 7 (738 aa).

Topologically, residues M1 to L104 are cytoplasmic. The chain crosses the membrane as a helical span at residues F105–V125. The Extracellular portion of the chain corresponds to D126–L139. A helical transmembrane segment spans residues A140 to L160. Topologically, residues Q161–R193 are cytoplasmic. Residues Y194 to L214 traverse the membrane as a helical segment. Topologically, residues H215–T227 are extracellular. The chain crosses the membrane as a helical span at residues A228–T248. Residues S249–Y268 lie on the Cytoplasmic side of the membrane. A helical membrane pass occupies residues Y269 to V289. Over E290 to P395 the chain is Extracellular. Residues G396–I416 traverse the membrane as a helical segment. The Cytoplasmic segment spans residues G417–E738. A nucleoside 3',5'-cyclic phosphate-binding positions include L502–F632 and E573. Residues F618–Y633 form a calmodulin-binding region. The IQ domain occupies R638–E667. Disordered regions lie at residues G671–S693 and L715–E738.

The protein belongs to the cyclic nucleotide-gated cation channel (TC 1.A.1.5) family. Homotetramer or heterotetramer.

The protein localises to the cell membrane. In terms of biological role, putative cyclic nucleotide-gated ion channel. The protein is Putative cyclic nucleotide-gated ion channel 7 (CNGC7) of Arabidopsis thaliana (Mouse-ear cress).